The sequence spans 157 residues: Transmembrane protein 42 (157 aa).

4 consecutive transmembrane segments (helical) span residues 37–57 (FWGV…AAAA), 67–87 (IGLC…MWTF), 100–120 (IASV…GYLL), and 124–144 (CQEI…TLIH).

It is found in the membrane. This chain is Transmembrane protein 42 (Tmem42), found in Mus musculus (Mouse).